Consider the following 255-residue polypeptide: Snake venom serine protease HS112 (255 aa).

The first 18 residues, 1 to 18, serve as a signal peptide directing secretion; the sequence is MVLIRVIANLLILQLSYA. The propeptide occupies 19–24; it reads QKSSEL. A Peptidase S1 domain is found at 25-246; that stretch reads VIGGDECDIN…YLPWIQSIIA (222 aa). Intrachain disulfides connect Cys31–Cys162, Cys49–Cys65, Cys97–Cys253, Cys141–Cys207, Cys173–Cys186, and Cys197–Cys222. Residues His64 and Asp109 each act as charge relay system in the active site. A glycan (N-linked (GlcNAc...) asparagine) is linked at Asn169. Ser201 serves as the catalytic Charge relay system. A glycan (N-linked (GlcNAc...) asparagine) is linked at Asn248.

This sequence belongs to the peptidase S1 family. Snake venom subfamily. As to quaternary structure, monomer. As to expression, expressed by the venom gland.

The protein resides in the secreted. Its function is as follows. Snake venom serine protease that may act in the hemostasis system of the prey. The protein is Snake venom serine protease HS112 of Bothrops jararaca (Jararaca).